The chain runs to 334 residues: Protein-glutamate methylesterase/protein-glutamine glutaminase 1 (334 aa).

In terms of domain architecture, Response regulatory spans 2–120; sequence NIGIVNDLPL…GAAGDTTKLL (119 aa). At aspartate 53 the chain carries 4-aspartylphosphate. A CheB-type methylesterase domain is found at 145–334; it reads RAGGGPLIAI…AGELAALARI (190 aa). Residues serine 157, histidine 184, and aspartate 277 contribute to the active site.

It belongs to the CheB family. Phosphorylated by CheA. Phosphorylation of the N-terminal regulatory domain activates the methylesterase activity.

It localises to the cytoplasm. It catalyses the reaction [protein]-L-glutamate 5-O-methyl ester + H2O = L-glutamyl-[protein] + methanol + H(+). The catalysed reaction is L-glutaminyl-[protein] + H2O = L-glutamyl-[protein] + NH4(+). Involved in chemotaxis. Part of a chemotaxis signal transduction system that modulates chemotaxis in response to various stimuli. Catalyzes the demethylation of specific methylglutamate residues introduced into the chemoreceptors (methyl-accepting chemotaxis proteins or MCP) by CheR. Also mediates the irreversible deamidation of specific glutamine residues to glutamic acid. This is Protein-glutamate methylesterase/protein-glutamine glutaminase 1 from Burkholderia lata (strain ATCC 17760 / DSM 23089 / LMG 22485 / NCIMB 9086 / R18194 / 383).